A 130-amino-acid polypeptide reads, in one-letter code: Large ribosomal subunit protein bL12 (130 aa).

Belongs to the bacterial ribosomal protein bL12 family. Homodimer. Part of the ribosomal stalk of the 50S ribosomal subunit. Forms a multimeric L10(L12)X complex, where L10 forms an elongated spine to which 2 to 4 L12 dimers bind in a sequential fashion. Binds GTP-bound translation factors.

Forms part of the ribosomal stalk which helps the ribosome interact with GTP-bound translation factors. Is thus essential for accurate translation. This Mycobacterium leprae (strain TN) protein is Large ribosomal subunit protein bL12.